Reading from the N-terminus, the 163-residue chain is Putative 4-hydroxy-4-methyl-2-oxoglutarate aldolase (163 aa).

Residues 76–79 (GDMI) and Arg98 contribute to the substrate site. Position 99 (Asp99) interacts with a divalent metal cation.

The protein belongs to the class II aldolase/RraA-like family. In terms of assembly, homotrimer. It depends on a divalent metal cation as a cofactor.

The enzyme catalyses 4-hydroxy-4-methyl-2-oxoglutarate = 2 pyruvate. It catalyses the reaction oxaloacetate + H(+) = pyruvate + CO2. Its function is as follows. Catalyzes the aldol cleavage of 4-hydroxy-4-methyl-2-oxoglutarate (HMG) into 2 molecules of pyruvate. Also contains a secondary oxaloacetate (OAA) decarboxylase activity due to the common pyruvate enolate transition state formed following C-C bond cleavage in the retro-aldol and decarboxylation reactions. The protein is Putative 4-hydroxy-4-methyl-2-oxoglutarate aldolase of Pseudomonas fluorescens (strain SBW25).